The primary structure comprises 450 residues: D-inositol 3-phosphate glycosyltransferase (450 aa).

His21 provides a ligand contact to 1D-myo-inositol 3-phosphate. UDP-N-acetyl-alpha-D-glucosamine contacts are provided by residues 27–28 and Gly35; that span reads QP. Residues 32–37, Lys90, Tyr123, Thr147, and Arg167 each bind 1D-myo-inositol 3-phosphate; that span reads DAGGMN. UDP-N-acetyl-alpha-D-glucosamine is bound by residues Arg241, Lys246, and Val307. Mg(2+) is bound by residues Tyr316, Arg317, and Ala319. Residues Glu329 and Glu337 each coordinate UDP-N-acetyl-alpha-D-glucosamine. Thr343 contacts Mg(2+).

It belongs to the glycosyltransferase group 1 family. MshA subfamily. Homodimer.

The catalysed reaction is 1D-myo-inositol 3-phosphate + UDP-N-acetyl-alpha-D-glucosamine = 1D-myo-inositol 2-acetamido-2-deoxy-alpha-D-glucopyranoside 3-phosphate + UDP + H(+). In terms of biological role, catalyzes the transfer of a N-acetyl-glucosamine moiety to 1D-myo-inositol 3-phosphate to produce 1D-myo-inositol 2-acetamido-2-deoxy-glucopyranoside 3-phosphate in the mycothiol biosynthesis pathway. The chain is D-inositol 3-phosphate glycosyltransferase from Geodermatophilus obscurus (strain ATCC 25078 / DSM 43160 / JCM 3152 / CCUG 61914 / KCC A-0152 / KCTC 9177 / NBRC 13315 / NRRL B-3577 / G-20).